The following is a 383-amino-acid chain: Glutamate 5-kinase (383 aa).

Residue lysine 17 coordinates ATP. Residues serine 64, aspartate 151, and asparagine 165 each contribute to the substrate site. 185–186 (SD) serves as a coordination point for ATP. One can recognise a PUA domain in the interval 291-367 (SGTIRVDAGA…DEIEGILGYN (77 aa)).

This sequence belongs to the glutamate 5-kinase family.

It is found in the cytoplasm. It catalyses the reaction L-glutamate + ATP = L-glutamyl 5-phosphate + ADP. It participates in amino-acid biosynthesis; L-proline biosynthesis; L-glutamate 5-semialdehyde from L-glutamate: step 1/2. Functionally, catalyzes the transfer of a phosphate group to glutamate to form L-glutamate 5-phosphate. The chain is Glutamate 5-kinase from Methanosarcina barkeri (strain Fusaro / DSM 804).